The following is a 551-amino-acid chain: Arginine--tRNA ligase (551 aa).

The 'HIGH' region signature appears at alanine 123 to arginine 133.

Belongs to the class-I aminoacyl-tRNA synthetase family. As to quaternary structure, monomer.

It is found in the cytoplasm. The catalysed reaction is tRNA(Arg) + L-arginine + ATP = L-arginyl-tRNA(Arg) + AMP + diphosphate. In Prosthecochloris aestuarii (strain DSM 271 / SK 413), this protein is Arginine--tRNA ligase.